Reading from the N-terminus, the 130-residue chain is D-ribose pyranase (130 aa).

The active-site Proton donor is the histidine 20. Residues aspartate 28, histidine 97, and 119-121 (YAN) contribute to the substrate site.

The protein belongs to the RbsD / FucU family. RbsD subfamily. As to quaternary structure, homodecamer.

The protein resides in the cytoplasm. The enzyme catalyses beta-D-ribopyranose = beta-D-ribofuranose. The protein operates within carbohydrate metabolism; D-ribose degradation; D-ribose 5-phosphate from beta-D-ribopyranose: step 1/2. Its function is as follows. Catalyzes the interconversion of beta-pyran and beta-furan forms of D-ribose. The protein is D-ribose pyranase of Bacillus pumilus (strain SAFR-032).